The following is a 282-amino-acid chain: Protein GAM-1 (282 aa).

The BC-box-like motif lies at 251 to 260 (SLQDWARLGV).

As to quaternary structure, interacts with host HDAC1. Interacts with host E1-activating enzyme (SAE1/UBA2 heterodimer). Interacts with host retinoblastoma protein. Seems to form a complex with host E4F1 and HDAC1. Seems to form complexes with either CUL2-elongin BC complex-RBX1 or CUL5-elongin BC complex-RBX1. Interacts with TCEB1/Elongin-C, CUL2 and CUL5 in vitro.

It localises to the host nucleus. Its function is as follows. Early protein essential for viral replication. Strong and global transcriptional activator of both viral and cellular genes. Activates transcription by blocking host retinoblastoma protein (RB) and inhibiting the SUMO pathway. Inhibition of host RB leads to the activation of E2F1-dependent transcription and, in particular, of E2F1-regulated S-phase genes. Stimulation of progression from G1 to S phase allows the virus to efficiently use the cellular DNA replicating machinery to achieve viral genome replication. Blocks the SUMO pathway by targeting the E1 enzyme (SAE1/UBA2 heterodimer) to the ubiquitin-proteasome machinery. Mediates SAE1 degradation possibly through the formation of complexes with either CUL2-elongin BC complex-RBX1 or CUL5-elongin BC complex-RBX1. The degradation of UBA2 is probably a consequent effect of SAE1 disappearance. Inhibits HDAC1 sumoylation, thereby interfering with histone deacetylation mediated by HDAC1, leading to activation of transcription. Mediates induction of heat-shock response. Seems to have an antiapoptotic function. The sequence is that of Protein GAM-1 from Galliformes (FAdV-1).